A 182-amino-acid chain; its full sequence is Adenine phosphoribosyltransferase (182 aa).

It belongs to the purine/pyrimidine phosphoribosyltransferase family. As to quaternary structure, homodimer.

It localises to the cytoplasm. The catalysed reaction is AMP + diphosphate = 5-phospho-alpha-D-ribose 1-diphosphate + adenine. It functions in the pathway purine metabolism; AMP biosynthesis via salvage pathway; AMP from adenine: step 1/1. In terms of biological role, catalyzes a salvage reaction resulting in the formation of AMP, that is energically less costly than de novo synthesis. This Stutzerimonas stutzeri (Pseudomonas stutzeri) protein is Adenine phosphoribosyltransferase.